A 382-amino-acid polypeptide reads, in one-letter code: Dual-specificity RNA methyltransferase RlmN (382 aa).

Glu-113 acts as the Proton acceptor in catalysis. The Radical SAM core domain occupies Glu-119 to Asp-358. Cysteines 126 and 363 form a disulfide. 3 residues coordinate [4Fe-4S] cluster: Cys-133, Cys-137, and Cys-140. S-adenosyl-L-methionine is bound by residues Gly-187–Glu-188, Ser-219, Ser-241–His-243, and Asn-320. Cys-363 serves as the catalytic S-methylcysteine intermediate.

The protein belongs to the radical SAM superfamily. RlmN family. [4Fe-4S] cluster serves as cofactor.

The protein resides in the cytoplasm. The enzyme catalyses adenosine(2503) in 23S rRNA + 2 reduced [2Fe-2S]-[ferredoxin] + 2 S-adenosyl-L-methionine = 2-methyladenosine(2503) in 23S rRNA + 5'-deoxyadenosine + L-methionine + 2 oxidized [2Fe-2S]-[ferredoxin] + S-adenosyl-L-homocysteine. It catalyses the reaction adenosine(37) in tRNA + 2 reduced [2Fe-2S]-[ferredoxin] + 2 S-adenosyl-L-methionine = 2-methyladenosine(37) in tRNA + 5'-deoxyadenosine + L-methionine + 2 oxidized [2Fe-2S]-[ferredoxin] + S-adenosyl-L-homocysteine. Specifically methylates position 2 of adenine 2503 in 23S rRNA and position 2 of adenine 37 in tRNAs. m2A2503 modification seems to play a crucial role in the proofreading step occurring at the peptidyl transferase center and thus would serve to optimize ribosomal fidelity. The polypeptide is Dual-specificity RNA methyltransferase RlmN (Wigglesworthia glossinidia brevipalpis).